Here is a 252-residue protein sequence, read N- to C-terminus: 2-succinyl-6-hydroxy-2,4-cyclohexadiene-1-carboxylate synthase (252 aa).

It belongs to the AB hydrolase superfamily. MenH family. Monomer.

The catalysed reaction is 5-enolpyruvoyl-6-hydroxy-2-succinyl-cyclohex-3-ene-1-carboxylate = (1R,6R)-6-hydroxy-2-succinyl-cyclohexa-2,4-diene-1-carboxylate + pyruvate. It functions in the pathway quinol/quinone metabolism; 1,4-dihydroxy-2-naphthoate biosynthesis; 1,4-dihydroxy-2-naphthoate from chorismate: step 3/7. It participates in quinol/quinone metabolism; menaquinone biosynthesis. Its function is as follows. Catalyzes a proton abstraction reaction that results in 2,5-elimination of pyruvate from 2-succinyl-5-enolpyruvyl-6-hydroxy-3-cyclohexene-1-carboxylate (SEPHCHC) and the formation of 2-succinyl-6-hydroxy-2,4-cyclohexadiene-1-carboxylate (SHCHC). In Escherichia coli O8 (strain IAI1), this protein is 2-succinyl-6-hydroxy-2,4-cyclohexadiene-1-carboxylate synthase.